Reading from the N-terminus, the 201-residue chain is Protein GrpE (201 aa).

The interval 1–32 is disordered; that stretch reads MTDRDRQPEDTTAPTGEPVVSKPYIMPDDPEP.

It belongs to the GrpE family. Homodimer.

It localises to the cytoplasm. Functionally, participates actively in the response to hyperosmotic and heat shock by preventing the aggregation of stress-denatured proteins, in association with DnaK and GrpE. It is the nucleotide exchange factor for DnaK and may function as a thermosensor. Unfolded proteins bind initially to DnaJ; upon interaction with the DnaJ-bound protein, DnaK hydrolyzes its bound ATP, resulting in the formation of a stable complex. GrpE releases ADP from DnaK; ATP binding to DnaK triggers the release of the substrate protein, thus completing the reaction cycle. Several rounds of ATP-dependent interactions between DnaJ, DnaK and GrpE are required for fully efficient folding. The sequence is that of Protein GrpE from Bradyrhizobium diazoefficiens (strain JCM 10833 / BCRC 13528 / IAM 13628 / NBRC 14792 / USDA 110).